The sequence spans 512 residues: DNA damage-binding protein CMR1 (512 aa).

The interval 32–96 (SQIKREAGVE…IPNVNDNQLL (65 aa)) is disordered. The segment covering 34–46 (IKREAGVEDEHLD) has biased composition (basic and acidic residues). Residues 47–60 (RKRKKKAGSAKKAV) show a composition bias toward basic residues. 7 WD repeats span residues 189–230 (LTAE…PEDE), 241–281 (LFTK…SEEI), 289–329 (DDPL…TEIN), 333–373 (LSDK…NKPE), 390–429 (DSRL…PEDL), 442–481 (GRWT…LAHL), and 482–512 (PTAT…FLFT).

It belongs to the WD repeat DDB2/WDR76 family.

Its function is as follows. DNA-binding protein that binds to both single- and double-stranded DNA. Binds preferentially to UV-damaged DNA. May be involved in DNA-metabolic processes. The sequence is that of DNA damage-binding protein CMR1 from Kluyveromyces lactis (strain ATCC 8585 / CBS 2359 / DSM 70799 / NBRC 1267 / NRRL Y-1140 / WM37) (Yeast).